The following is a 446-amino-acid chain: Elongation factor 1-alpha (446 aa).

The tr-type G domain occupies 5 to 230 (KNHLNLVVIG…DALDQPKRPK (226 aa)). The interval 14-21 (GHVDSGKS) is G1. 14–21 (GHVDSGKS) is a binding site for GTP. Residues 70–74 (GITID) are G2. The segment at 91 to 94 (DAPG) is G3. GTP contacts are provided by residues 91–95 (DAPGH) and 153–156 (NKMD). A G4 region spans residues 153 to 156 (NKMD). The G5 stretch occupies residues 194–196 (SGW).

This sequence belongs to the TRAFAC class translation factor GTPase superfamily. Classic translation factor GTPase family. EF-Tu/EF-1A subfamily.

The protein resides in the cytoplasm. Its function is as follows. This protein promotes the GTP-dependent binding of aminoacyl-tRNA to the A-site of ribosomes during protein biosynthesis. The chain is Elongation factor 1-alpha (EFAA) from Stylonychia lemnae (Ciliate).